Consider the following 291-residue polypeptide: N-acetylmannosamine kinase (291 aa).

Residues 5–12 (AIDIGGTK) and 132–139 (GVGGGVVS) contribute to the ATP site. Zn(2+)-binding residues include His156, Cys166, Cys168, and Cys173.

It belongs to the ROK (NagC/XylR) family. NanK subfamily. Homodimer.

The catalysed reaction is an N-acyl-D-mannosamine + ATP = an N-acyl-D-mannosamine 6-phosphate + ADP + H(+). Its pathway is amino-sugar metabolism; N-acetylneuraminate degradation; D-fructose 6-phosphate from N-acetylneuraminate: step 2/5. Its function is as follows. Catalyzes the phosphorylation of N-acetylmannosamine (ManNAc) to ManNAc-6-P. This chain is N-acetylmannosamine kinase, found in Escherichia coli O6:K15:H31 (strain 536 / UPEC).